A 318-amino-acid chain; its full sequence is MEMAAAVGGSGRRDAEAELNLPPGFRFHPTDEELVVHYLCRKVARQPLPVPIIAEVDLYKLDPWDLPEKALFGRKEWYFFTPRDRKYPNGSRPNRAAGRGYWKATGADKPVAPKGSARTVGIKKALVFYSGKAPRGVKTDWIMHEYRLADADRAPGGKKGSQKLDEWVLCRLYNKKNNWEKVKLEQQDVASVAAAAPRNHHHQNGEVMDAAAADTMSDSFQTHDSDIDNASAGLRHGGCGGGGFGDVAPPRNGFVTVKEDNDWFTGLNFDELQPPYMMNLQHMQMQMVNPAAPGHDGGYLQSISSPQMKMWQTILPPF.

Positions 21-175 (LPPGFRFHPT…EWVLCRLYNK (155 aa)) constitute an NAC domain.

As to expression, expressed in stems, leaf blades and callus. Weakly expressed in developing flowers.

The protein resides in the nucleus. Its function is as follows. Probable transcription factor involved in stress response. The protein is NAC domain-containing protein 68 of Oryza sativa subsp. japonica (Rice).